An 842-amino-acid polypeptide reads, in one-letter code: Valine--tRNA ligase (842 aa).

A 'HIGH' region motif is present at residues 86–96 (PFTSGELHMGH). Positions 572 to 576 (RMSKS) match the 'KMSKS' region motif. Lys575 contacts ATP.

The protein belongs to the class-I aminoacyl-tRNA synthetase family. ValS type 2 subfamily.

It localises to the cytoplasm. The catalysed reaction is tRNA(Val) + L-valine + ATP = L-valyl-tRNA(Val) + AMP + diphosphate. In terms of biological role, catalyzes the attachment of valine to tRNA(Val). As ValRS can inadvertently accommodate and process structurally similar amino acids such as threonine, to avoid such errors, it has a 'posttransfer' editing activity that hydrolyzes mischarged Thr-tRNA(Val) in a tRNA-dependent manner. The chain is Valine--tRNA ligase from Saccharolobus solfataricus (strain ATCC 35092 / DSM 1617 / JCM 11322 / P2) (Sulfolobus solfataricus).